The chain runs to 375 residues: Succinyl-diaminopimelate desuccinylase (375 aa).

H66 contacts Zn(2+). D68 is a catalytic residue. Residue D99 coordinates Zn(2+). The Proton acceptor role is filled by E133. The Zn(2+) site is built by E134, E162, and H348.

It belongs to the peptidase M20A family. DapE subfamily. Homodimer. Requires Zn(2+) as cofactor. The cofactor is Co(2+).

It catalyses the reaction N-succinyl-(2S,6S)-2,6-diaminopimelate + H2O = (2S,6S)-2,6-diaminopimelate + succinate. It participates in amino-acid biosynthesis; L-lysine biosynthesis via DAP pathway; LL-2,6-diaminopimelate from (S)-tetrahydrodipicolinate (succinylase route): step 3/3. Catalyzes the hydrolysis of N-succinyl-L,L-diaminopimelic acid (SDAP), forming succinate and LL-2,6-diaminopimelate (DAP), an intermediate involved in the bacterial biosynthesis of lysine and meso-diaminopimelic acid, an essential component of bacterial cell walls. The chain is Succinyl-diaminopimelate desuccinylase from Aeromonas salmonicida (strain A449).